The sequence spans 441 residues: Chromosomal replication initiator protein DnaA (441 aa).

Residues 1–71 (MDIRWEEILE…AVYQVVGDRF (71 aa)) are domain I, interacts with DnaA modulators. Positions 71–99 (FKVSILTESETSSHVLKEVIQSKFDDSDS) are domain II. Positions 100-318 (DLNPEYIFSN…GIVNDLVMYK (219 aa)) are domain III, AAA+ region. Glycine 143, glycine 145, lysine 146, and threonine 147 together coordinate ATP. The tract at residues 319-441 (KAYEYFLLTE…HTIKHKISFQ (123 aa)) is domain IV, binds dsDNA.

Belongs to the DnaA family. Oligomerizes as a right-handed, spiral filament on DNA at oriC.

The protein resides in the cytoplasm. Functionally, plays an essential role in the initiation and regulation of chromosomal replication. ATP-DnaA binds to the origin of replication (oriC) to initiate formation of the DNA replication initiation complex once per cell cycle. Binds the DnaA box (a 9 base pair repeat at the origin) and separates the double-stranded (ds)DNA. Forms a right-handed helical filament on oriC DNA; dsDNA binds to the exterior of the filament while single-stranded (ss)DNA is stabiized in the filament's interior. The ATP-DnaA-oriC complex binds and stabilizes one strand of the AT-rich DNA unwinding element (DUE), permitting loading of DNA polymerase. After initiation quickly degrades to an ADP-DnaA complex that is not apt for DNA replication. Binds acidic phospholipids. The protein is Chromosomal replication initiator protein DnaA of Leptospira biflexa serovar Patoc (strain Patoc 1 / Ames).